Here is a 405-residue protein sequence, read N- to C-terminus: Argininosuccinate synthase (405 aa).

11–19 is a binding site for ATP; sequence AYSGGLDTS. Tyr-90 is an L-citrulline binding site. Gly-119 lines the ATP pocket. L-aspartate contacts are provided by Thr-121, Asn-125, and Asp-126. Asn-125 lines the L-citrulline pocket. L-citrulline is bound by residues Arg-129, Ser-178, Ser-187, Glu-263, and Tyr-275.

This sequence belongs to the argininosuccinate synthase family. Type 1 subfamily. In terms of assembly, homotetramer.

Its subcellular location is the cytoplasm. The enzyme catalyses L-citrulline + L-aspartate + ATP = 2-(N(omega)-L-arginino)succinate + AMP + diphosphate + H(+). It functions in the pathway amino-acid biosynthesis; L-arginine biosynthesis; L-arginine from L-ornithine and carbamoyl phosphate: step 2/3. This Legionella pneumophila (strain Corby) protein is Argininosuccinate synthase.